Consider the following 247-residue polypeptide: Segregation and condensation protein A (247 aa).

Belongs to the ScpA family. Component of a cohesin-like complex composed of ScpA, ScpB and the Smc homodimer, in which ScpA and ScpB bind to the head domain of Smc. The presence of the three proteins is required for the association of the complex with DNA.

It localises to the cytoplasm. Participates in chromosomal partition during cell division. May act via the formation of a condensin-like complex containing Smc and ScpB that pull DNA away from mid-cell into both cell halves. The sequence is that of Segregation and condensation protein A from Bacillus cereus (strain 03BB102).